The following is a 418-amino-acid chain: Centromere protein U (418 aa).

Basic residues predominate over residues 1 to 11 (MAPRGRRRPRP). Residues 1–76 (MAPRGRRRPR…TYETFDPPLH (76 aa)) are disordered. The Nuclear localization signal signature appears at 6–23 (RRRPRPHRSEGARRSKNT). Residues 12-42 (HRSEGARRSKNTLERTHSMKDKAGQKCKPID) show a composition bias toward basic and acidic residues. At Thr78 the chain carries Phosphothreonine; by PLK1. Positions 88–227 (SKHCGLSLSS…KRKKSRSKAI (140 aa)) are disordered. At Thr98 the chain carries Phosphothreonine. Position 108 is a phosphoserine (Ser108). Position 110 is a phosphothreonine (Thr110). Ser111, Ser116, and Ser120 each carry phosphoserine. Basic residues predominate over residues 124-133 (SAKKPGRKLR). Phosphoserine occurs at positions 136, 139, and 141. Positions 145-165 (SDTRRKVKSAEKISTQRHEVI) are enriched in basic and acidic residues. The segment covering 180–193 (SVTSKKTGPLSAQP) has biased composition (polar residues). Lys185 participates in a covalent cross-link: Glycyl lysine isopeptide (Lys-Gly) (interchain with G-Cter in SUMO2). Ser190 and Ser194 each carry phosphoserine. Residues 208–224 (TQKKGKISHDKRKKSRS) are compositionally biased toward basic residues. Ser232 carries the post-translational modification Phosphoserine. Coiled-coil stretches lie at residues 297 to 356 (QMLT…NAAY) and 397 to 417 (LLGA…LLDQ). Residues 303 to 320 (KRKNAKMISDIEKKRQRM) carry the Nuclear localization signal motif.

It belongs to the CENP-U/AME1 family. As to quaternary structure, component of the CENPA-NAC complex, at least composed of CENPA, CENPC, CENPH, CENPM, CENPN, CENPT and CENPU. The CENPA-NAC complex interacts with the CENPA-CAD complex, composed of CENPI, CENPK, CENPL, CENPO, CENPP, CENPQ, CENPR and CENPS. Interacts with MLF1. Interacts with PLK1. (Microbial infection) Interacts with the N-terminal domain of Kaposi's sarcoma-associated herpesvirus latent nuclear antigen (LNA). In terms of processing, phosphorylated by PLK1 at Thr-78, creating a self-tethering site that specifically interacts with the polo-box domain of PLK1. In terms of tissue distribution, expressed at high levels in the testis, fetal liver, thymus, bone marrow and at lower levels in the lymph nodes, placenta, colon and spleen. Present in all cell lines examined, including B-cells, T-cells, epithelial cells and fibroblast cells. Expressed at high levels in glioblastoma cell lines.

It localises to the cytoplasm. The protein resides in the nucleus. The protein localises to the chromosome. Its subcellular location is the centromere. It is found in the kinetochore. Component of the CENPA-NAC (nucleosome-associated) complex, a complex that plays a central role in assembly of kinetochore proteins, mitotic progression and chromosome segregation. The CENPA-NAC complex recruits the CENPA-CAD (nucleosome distal) complex and may be involved in incorporation of newly synthesized CENPA into centromeres. Plays an important role in the correct PLK1 localization to the mitotic kinetochores. A scaffold protein responsible for the initial recruitment and maintenance of the kinetochore PLK1 population until its degradation. Involved in transcriptional repression. The sequence is that of Centromere protein U (CENPU) from Homo sapiens (Human).